The sequence spans 610 residues: tRNA uridine 5-carboxymethylaminomethyl modification enzyme MnmG (610 aa).

14–19 (GAGHAG) serves as a coordination point for FAD. An NAD(+)-binding site is contributed by 274–288 (GPRYCPSIEDKIVKF).

This sequence belongs to the MnmG family. Homodimer. Heterotetramer of two MnmE and two MnmG subunits. It depends on FAD as a cofactor.

The protein resides in the cytoplasm. In terms of biological role, NAD-binding protein involved in the addition of a carboxymethylaminomethyl (cmnm) group at the wobble position (U34) of certain tRNAs, forming tRNA-cmnm(5)s(2)U34. The sequence is that of tRNA uridine 5-carboxymethylaminomethyl modification enzyme MnmG from Chlamydia trachomatis serovar D (strain ATCC VR-885 / DSM 19411 / UW-3/Cx).